A 609-amino-acid chain; its full sequence is Putative pectinesterase/pectinesterase inhibitor 45 (609 aa).

Residues 25 to 45 (IILGVVSVLVVAAAIIGGAFA) form a helical membrane-spanning segment. N-linked (GlcNAc...) asparagine glycosylation is found at Asn51, Asn62, Asn100, Asn114, Asn183, Asn229, Asn296, Asn306, Asn346, and Asn362. The disordered stretch occupies residues 54–87 (QEQGKTTNNKSKDSPTKSESPSPKPPSSAAQTVK). Residues 89-241 (GQVDKIIQTL…QVLTSNSLAM (153 aa)) are pectinesterase inhibitor 45. The pectinesterase 45 stretch occupies residues 296-593 (NATVAKDGSG…FTVGPFLQGE (298 aa)). Substrate is bound by residues Thr371 and Gln401. Asp424 acts as the Proton donor; for pectinesterase activity in catalysis. Cys438 and Cys458 are disulfide-bonded. The Nucleophile; for pectinesterase activity role is filled by Asp445. The N-linked (GlcNAc...) asparagine glycan is linked to Asn491. Substrate contacts are provided by Arg513 and Trp515.

The protein in the N-terminal section; belongs to the PMEI family. It in the C-terminal section; belongs to the pectinesterase family. In terms of tissue distribution, expressed in flower buds and pollen.

Its subcellular location is the membrane. The catalysed reaction is [(1-&gt;4)-alpha-D-galacturonosyl methyl ester](n) + n H2O = [(1-&gt;4)-alpha-D-galacturonosyl](n) + n methanol + n H(+). Its pathway is glycan metabolism; pectin degradation; 2-dehydro-3-deoxy-D-gluconate from pectin: step 1/5. Acts in the modification of cell walls via demethylesterification of cell wall pectin. The chain is Putative pectinesterase/pectinesterase inhibitor 45 (PME45) from Arabidopsis thaliana (Mouse-ear cress).